Consider the following 238-residue polypeptide: Ribonuclease PH (238 aa).

Phosphate contacts are provided by residues Arg-86 and 124-126; that span reads GTR.

The protein belongs to the RNase PH family. As to quaternary structure, homohexameric ring arranged as a trimer of dimers.

It catalyses the reaction tRNA(n+1) + phosphate = tRNA(n) + a ribonucleoside 5'-diphosphate. Its function is as follows. Phosphorolytic 3'-5' exoribonuclease that plays an important role in tRNA 3'-end maturation. Removes nucleotide residues following the 3'-CCA terminus of tRNAs; can also add nucleotides to the ends of RNA molecules by using nucleoside diphosphates as substrates, but this may not be physiologically important. Probably plays a role in initiation of 16S rRNA degradation (leading to ribosome degradation) during starvation. In Salmonella choleraesuis (strain SC-B67), this protein is Ribonuclease PH.